Reading from the N-terminus, the 1227-residue chain is Protein U7 (1227 aa).

The protein belongs to the herpesviridae US22 family.

The protein is Protein U7 (U7/U5) of Homo sapiens (Human).